The following is a 274-amino-acid chain: Proteasome subunit beta (274 aa).

Positions 1-52 are cleaved as a propeptide — removed in mature form; by autocatalysis; that stretch reads MADPMGGAGRLPAVFMTPGTSSFTDFLSQSAPHLLPGARGGLPGPVTEVAHG. The active-site Nucleophile is the T53.

Belongs to the peptidase T1B family. As to quaternary structure, the 20S proteasome core is composed of 14 alpha and 14 beta subunits that assemble into four stacked heptameric rings, resulting in a barrel-shaped structure. The two inner rings, each composed of seven catalytic beta subunits, are sandwiched by two outer rings, each composed of seven alpha subunits. The catalytic chamber with the active sites is on the inside of the barrel. Has a gated structure, the ends of the cylinder being occluded by the N-termini of the alpha-subunits. Is capped by the proteasome-associated ATPase, ARC.

Its subcellular location is the cytoplasm. The catalysed reaction is Cleavage of peptide bonds with very broad specificity.. It functions in the pathway protein degradation; proteasomal Pup-dependent pathway. With respect to regulation, the formation of the proteasomal ATPase ARC-20S proteasome complex, likely via the docking of the C-termini of ARC into the intersubunit pockets in the alpha-rings, may trigger opening of the gate for substrate entry. Interconversion between the open-gate and close-gate conformations leads to a dynamic regulation of the 20S proteasome proteolysis activity. Functionally, component of the proteasome core, a large protease complex with broad specificity involved in protein degradation. The sequence is that of Proteasome subunit beta from Frankia alni (strain DSM 45986 / CECT 9034 / ACN14a).